A 317-amino-acid polypeptide reads, in one-letter code: Probable cell division protein WhiA (317 aa).

Positions 276-310 form a DNA-binding region, H-T-H motif; that stretch reads TLKELGEMVSGGKISKSGINHRLRKIDDIAEKLRA.

The protein belongs to the WhiA family.

Involved in cell division and chromosome segregation. This chain is Probable cell division protein WhiA, found in Bacillus thuringiensis (strain Al Hakam).